The sequence spans 146 residues: Hemoglobin subunit beta (146 aa).

The region spanning 2–146 is the Globin domain; that stretch reads HWSAEEKQLI…VAHALARKYH (145 aa). 2 residues coordinate heme b: histidine 63 and histidine 92.

Belongs to the globin family. Heterotetramer of two alpha chains and two beta chains. Red blood cells.

In terms of biological role, involved in oxygen transport from the lung to the various peripheral tissues. The protein is Hemoglobin subunit beta (HBB) of Psittacula krameri (Rose-ringed parakeet).